The primary structure comprises 200 residues: Putative 3-methyladenine DNA glycosylase (200 aa).

This sequence belongs to the DNA glycosylase MPG family.

In Rhodopseudomonas palustris (strain BisB18), this protein is Putative 3-methyladenine DNA glycosylase.